The chain runs to 380 residues: Interleukin-13 receptor subunit alpha-2 (380 aa).

A signal peptide spans 1–26 (MAFVCLAIGCLYTFLISTTFGCTSSS). Over 27 to 343 (DTEIKVNPPQ…EDLSKKTLLR (317 aa)) the chain is Extracellular. 3 consecutive Fibronectin type-III domains span residues 34 to 134 (PPQD…SPQG), 139 to 235 (KVQD…LQNI), and 240 to 333 (PPVY…CWEG). C65 and C113 form a disulfide bridge. N115 is a glycosylation site (N-linked (GlcNAc...) asparagine). 2 cysteine pairs are disulfide-bonded: C145–C155 and C184–C197. N-linked (GlcNAc...) asparagine glycosylation is found at N215, N290, and N299. A disulfide bridge connects residues C269 and C316. Positions 322–326 (WSEWS) match the WSXWS motif motif. A helical transmembrane segment spans residues 344 to 363 (FWLPFGFILILVIFVTGLLL). Over 364–380 (RKPNTYPKMIPEFFCDT) the chain is Cytoplasmic.

The protein belongs to the type I cytokine receptor family. Type 5 subfamily. In terms of assembly, interacts with IL4RA. Interacts with high affinity to interleukin-13 (IL13), but not to interleukin-4 (IL4). Cleaved by MMP8 leading to a soluble form that is also able to interact with IL13.

The protein localises to the cell membrane. Cell surface receptor that plays a role in the regulation of IL-13-mediated responses. Functions as a decoy receptor that inhibits IL-13- and IL-4-mediated signal transduction via the JAK-STAT pathway and thereby modulates immune responses and inflammation. Serves as a functional signaling receptor for IL-13 in an alternative pathway involving AP-1 ultimately leading to the production of TGFB1. In Homo sapiens (Human), this protein is Interleukin-13 receptor subunit alpha-2 (IL13RA2).